Here is a 220-residue protein sequence, read N- to C-terminus: Small ribosomal subunit protein uS2 (220 aa).

Belongs to the universal ribosomal protein uS2 family.

The protein is Small ribosomal subunit protein uS2 of Methanococcus maripaludis (strain C5 / ATCC BAA-1333).